Reading from the N-terminus, the 36-residue chain is Alpha-conotoxin-like Pu1.3 (36 aa).

Positions 1–21 (SDGRNAGADRKGFGLISQMFK) are excised as a propeptide. Disulfide bonds link Cys-24-Cys-30 and Cys-25-Cys-36.

This sequence belongs to the conotoxin A superfamily. As to expression, expressed by the venom duct.

The protein localises to the secreted. In terms of biological role, alpha-conotoxins act on postsynaptic membranes, they bind to the nicotinic acetylcholine receptors (nAChR) and thus inhibit them. The protein is Alpha-conotoxin-like Pu1.3 of Conus pulicarius (Flea-bitten cone).